We begin with the raw amino-acid sequence, 314 residues long: Coproporphyrin III ferrochelatase (314 aa).

Fe(2+) is bound by residues His186 and Glu268.

This sequence belongs to the ferrochelatase family.

It is found in the cytoplasm. The enzyme catalyses Fe-coproporphyrin III + 2 H(+) = coproporphyrin III + Fe(2+). The protein operates within porphyrin-containing compound metabolism; protoheme biosynthesis. Its function is as follows. Involved in coproporphyrin-dependent heme b biosynthesis. Catalyzes the insertion of ferrous iron into coproporphyrin III to form Fe-coproporphyrin III. The polypeptide is Coproporphyrin III ferrochelatase (Lactococcus lactis subsp. lactis (strain IL1403) (Streptococcus lactis)).